Reading from the N-terminus, the 419-residue chain is Epothilone C/D epoxidase (419 aa).

Substrate-binding residues include Ala180 and Gly304. Cys365 is a binding site for heme.

Belongs to the cytochrome P450 family. The cofactor is heme.

The enzyme catalyses epothilone C + 2 reduced [2Fe-2S]-[ferredoxin] + O2 + 2 H(+) = epothilone A + 2 oxidized [2Fe-2S]-[ferredoxin] + H2O. It catalyses the reaction epothilone D + 2 reduced [2Fe-2S]-[ferredoxin] + O2 + 2 H(+) = epothilone B + 2 oxidized [2Fe-2S]-[ferredoxin] + H2O. Its pathway is secondary metabolite biosynthesis; epothilone biosynthesis. Functionally, involved in the biosynthesis of epothilones, macrolactones which have a narrow anti-fungal spectrum and microtubule-stabilizing activity. Catalyzes the epoxidation of epothilones C and D to epothilones A and B, respectively. The sequence is that of Epothilone C/D epoxidase (cyp167A1) from Sorangium cellulosum (Polyangium cellulosum).